We begin with the raw amino-acid sequence, 355 residues long: Uroporphyrinogen decarboxylase (355 aa).

Substrate is bound by residues 27 to 31 (RQAGR), Asp-77, Tyr-154, Thr-209, and His-327.

It belongs to the uroporphyrinogen decarboxylase family. As to quaternary structure, homodimer.

It is found in the cytoplasm. The enzyme catalyses uroporphyrinogen III + 4 H(+) = coproporphyrinogen III + 4 CO2. Its pathway is porphyrin-containing compound metabolism; protoporphyrin-IX biosynthesis; coproporphyrinogen-III from 5-aminolevulinate: step 4/4. Catalyzes the decarboxylation of four acetate groups of uroporphyrinogen-III to yield coproporphyrinogen-III. In Tolumonas auensis (strain DSM 9187 / NBRC 110442 / TA 4), this protein is Uroporphyrinogen decarboxylase.